Here is a 671-residue protein sequence, read N- to C-terminus: Preterminal protein (671 aa).

The Nuclear localization signal signature appears at 380–389 (RLPVRRRRRR). A disordered region spans residues 386–409 (RRRRVPPPPPPPEEEEEGEALMEE). Residues 397–409 (PEEEEEGEALMEE) are compositionally biased toward acidic residues. O-(5'-phospho-DNA)-serine is present on Ser-580. The disordered stretch occupies residues 645–671 (GADVPLPPLPAGPEPPLPPGARPRHRF). Pro residues predominate over residues 649–665 (PLPPLPAGPEPPLPPGA).

The protein belongs to the adenoviridae terminal protein family. In terms of assembly, heterodimer with the polymerase; this heterodimer binds to bp 9 to 18 of the genome. Interacts with host POU2F1; POU2F1 binds to the auxiliary sequences in the inverted terminal repeats and tethers the pTP-POL heterodimer to the origin DNA thereby participating in the assembly of the pre-initiation complex (POL-TP-DBP-NFIA-POU2F1). Preterminal protein is used to replicate viral genome, upon genomic encapsidation it is processed first into iTP and finally into TP by adenovirus protease.

The protein resides in the host nucleus matrix. In terms of biological role, protein covalently bound to the viral DNA that acts as a primer for viral genomic replication by DNA strand displacement. Assembles on the viral origin of replication in an initiation complex with viral polymerase, DBP, host NFIA and host POU2F1/OCT1. During initiation, the polymerase covalently couples the first dCTP with Ser-580 of pTP. The terminal protein stimulates the template activity over 20 fold compared to protein-free templates. Neo-synthesized viral genomes are linked to two preterminal proteins, one for each 5' end. These new genomes are encapsidated in the nucleus, and during capsid maturation by viral protease, preterminal protein is first cleaved into intermediary (iTP), then into mature TP. May play a role in host nuclear matrix localization of genomic DNA. The chain is Preterminal protein from Homo sapiens (Human).